Here is a 343-residue protein sequence, read N- to C-terminus: Histone H1.8 (343 aa).

Residues 1–32 (MAPGSIASSDTSSSTSSSSTSSASSASAEGSS) show a composition bias toward low complexity. Disordered stretches follow at residues 1–50 (MAPG…VRAP) and 122–343 (ATGS…EAEG). The H15 domain occupies 52–130 (RHPPVLRMVL…GATGSFKLVP (79 aa)). A compositionally biased stretch (basic residues) spans 132-142 (DKRKIPPRKTA). Basic and acidic residues-rich tracts occupy residues 150-183 (EGKD…ERAA), 199-219 (QTKD…RPDK), and 235-247 (KVKE…ADTK). The Nuclear localization signal signature appears at 161–176 (KKDPANTVEVKKGSRK). A compositionally biased stretch (polar residues) spans 253–265 (QPGSQSSKSTVTK).

Belongs to the histone H1/H5 family. As to expression, oocyte (at protein level).

It is found in the cytoplasm. The protein resides in the nucleus. Its subcellular location is the chromosome. In terms of biological role, may play a key role in the control of gene expression during oogenesis and early embryogenesis, presumably through the perturbation of chromatin structure. Essential for meiotic maturation of germinal vesicle-stage oocytes. The somatic type linker histone H1c is rapidly replaced by H1oo in a donor nucleus transplanted into an oocyte. The greater mobility of H1oo as compared to H1c may contribute to this rapid replacement and increased instability of the embryonic chromatin structure. The rapid replacement of H1c with H1oo may play an important role in nuclear remodeling. The chain is Histone H1.8 from Bos taurus (Bovine).